A 509-amino-acid chain; its full sequence is Maturase K (509 aa).

It belongs to the intron maturase 2 family. MatK subfamily.

It localises to the plastid. It is found in the chloroplast. In terms of biological role, usually encoded in the trnK tRNA gene intron. Probably assists in splicing its own and other chloroplast group II introns. The sequence is that of Maturase K from Clematis lasiantha (Pipestem clematis).